Reading from the N-terminus, the 296-residue chain is 4-hydroxy-tetrahydrodipicolinate synthase (296 aa).

A pyruvate-binding site is contributed by T49. The active-site Proton donor/acceptor is Y137. K166 (schiff-base intermediate with substrate) is an active-site residue. I208 serves as a coordination point for pyruvate.

It belongs to the DapA family. As to quaternary structure, homotetramer; dimer of dimers.

Its subcellular location is the cytoplasm. It catalyses the reaction L-aspartate 4-semialdehyde + pyruvate = (2S,4S)-4-hydroxy-2,3,4,5-tetrahydrodipicolinate + H2O + H(+). It functions in the pathway amino-acid biosynthesis; L-lysine biosynthesis via DAP pathway; (S)-tetrahydrodipicolinate from L-aspartate: step 3/4. Catalyzes the condensation of (S)-aspartate-beta-semialdehyde [(S)-ASA] and pyruvate to 4-hydroxy-tetrahydrodipicolinate (HTPA). The chain is 4-hydroxy-tetrahydrodipicolinate synthase from Chlorobium chlorochromatii (strain CaD3).